A 39-amino-acid polypeptide reads, in one-letter code: Photosystem II reaction center protein J (39 aa).

A helical membrane pass occupies residues 9–29 (LWMVATVGGLAAGGLLILFVF).

Belongs to the PsbJ family. In terms of assembly, PSII is composed of 1 copy each of membrane proteins PsbA, PsbB, PsbC, PsbD, PsbE, PsbF, PsbH, PsbI, PsbJ, PsbK, PsbL, PsbM, PsbT, PsbX, PsbY, PsbZ, Psb30/Ycf12, at least 3 peripheral proteins of the oxygen-evolving complex and a large number of cofactors. It forms dimeric complexes.

The protein resides in the plastid. It localises to the chloroplast thylakoid membrane. In terms of biological role, one of the components of the core complex of photosystem II (PSII). PSII is a light-driven water:plastoquinone oxidoreductase that uses light energy to abstract electrons from H(2)O, generating O(2) and a proton gradient subsequently used for ATP formation. It consists of a core antenna complex that captures photons, and an electron transfer chain that converts photonic excitation into a charge separation. The polypeptide is Photosystem II reaction center protein J (Emiliania huxleyi (Coccolithophore)).